The following is a 340-amino-acid chain: Phenylalanine--tRNA ligase alpha subunit (340 aa).

Glutamate 255 lines the Mg(2+) pocket.

This sequence belongs to the class-II aminoacyl-tRNA synthetase family. Phe-tRNA synthetase alpha subunit type 1 subfamily. As to quaternary structure, tetramer of two alpha and two beta subunits. Mg(2+) serves as cofactor.

It localises to the cytoplasm. The enzyme catalyses tRNA(Phe) + L-phenylalanine + ATP = L-phenylalanyl-tRNA(Phe) + AMP + diphosphate + H(+). This chain is Phenylalanine--tRNA ligase alpha subunit, found in Desulfitobacterium hafniense (strain Y51).